Reading from the N-terminus, the 356-residue chain is Tyrosine recombinase XerS (356 aa).

The 106-residue stretch at 16-121 (LMPWFVLEYY…ALSSLYKYLT (106 aa)) folds into the Core-binding (CB) domain. A Tyr recombinase domain is found at 169 to 354 (KFLDYVENEY…VNDEQKNALD (186 aa)). Residues R210, K234, H306, R309, and H332 contribute to the active site. The active-site O-(3'-phospho-DNA)-tyrosine intermediate is Y341.

It belongs to the 'phage' integrase family. XerS subfamily.

It localises to the cytoplasm. With respect to regulation, ftsK is required for recombination. In terms of biological role, site-specific tyrosine recombinase, which acts by catalyzing the cutting and rejoining of the recombining DNA molecules. Essential to convert dimers of the bacterial chromosome into monomers to permit their segregation at cell division. The polypeptide is Tyrosine recombinase XerS (Streptococcus thermophilus (strain ATCC BAA-491 / LMD-9)).